The primary structure comprises 250 residues: 5-oxoprolinase subunit A (250 aa).

The protein belongs to the LamB/PxpA family. As to quaternary structure, forms a complex composed of PxpA, PxpB and PxpC.

The catalysed reaction is 5-oxo-L-proline + ATP + 2 H2O = L-glutamate + ADP + phosphate + H(+). Functionally, catalyzes the cleavage of 5-oxoproline to form L-glutamate coupled to the hydrolysis of ATP to ADP and inorganic phosphate. The sequence is that of 5-oxoprolinase subunit A from Staphylococcus haemolyticus (strain JCSC1435).